The following is a 469-amino-acid chain: DNA (cytosine-5-)-methyltransferase M.ApeKI (469 aa).

The SAM-dependent MTase C5-type domain occupies 4–469 (YSTISLFSGA…EALAEVLDAV (466 aa)). The active site involves C93.

This sequence belongs to the class I-like SAM-binding methyltransferase superfamily. C5-methyltransferase family.

The catalysed reaction is a 2'-deoxycytidine in DNA + S-adenosyl-L-methionine = a 5-methyl-2'-deoxycytidine in DNA + S-adenosyl-L-homocysteine + H(+). Cytosine methylase that recognizes the double-stranded sequence 5'-GC(A/T)GC-3', methylates C-5 position of the second cytosine on both strands, and protects the DNA from cleavage by the ApeKI endonuclease. This Aeropyrum pernix (strain ATCC 700893 / DSM 11879 / JCM 9820 / NBRC 100138 / K1) protein is DNA (cytosine-5-)-methyltransferase M.ApeKI.